The following is a 720-amino-acid chain: Replication restart protein PriA (720 aa).

Residues 200-366 (ILMKNCFTSW…LHKKCFYIKF (167 aa)) form the Helicase ATP-binding domain. 213-220 (KNNFYLKV) provides a ligand contact to ATP. The DEAH box signature appears at 309–312 (NQEH). The Zn(2+) site is built by Cys425, Cys428, Cys434, Cys437, Cys452, Cys455, Cys465, and Cys468.

This sequence belongs to the helicase family. PriA subfamily. As to quaternary structure, component of the replication restart primosome. Zn(2+) is required as a cofactor.

The enzyme catalyses Couples ATP hydrolysis with the unwinding of duplex DNA by translocating in the 3'-5' direction.. The catalysed reaction is ATP + H2O = ADP + phosphate + H(+). Its function is as follows. Initiates the restart of stalled replication forks, which reloads the replicative helicase on sites other than the origin of replication. Recognizes and binds to abandoned replication forks and remodels them to uncover a helicase loading site. Promotes assembly of the primosome at these replication forks. This is Replication restart protein PriA from Buchnera aphidicola subsp. Schizaphis graminum (strain Sg).